The primary structure comprises 215 residues: tRNA (guanine-N(7)-)-methyltransferase (215 aa).

4 residues coordinate S-adenosyl-L-methionine: Glu-44, Glu-69, Asp-96, and Asp-118. The active site involves Asp-118. Lys-122 contributes to the substrate binding site. An interaction with RNA region spans residues Arg-124–Arg-129. Residues Asp-154 and Thr-192–Glu-195 contribute to the substrate site.

The protein belongs to the class I-like SAM-binding methyltransferase superfamily. TrmB family.

It catalyses the reaction guanosine(46) in tRNA + S-adenosyl-L-methionine = N(7)-methylguanosine(46) in tRNA + S-adenosyl-L-homocysteine. The protein operates within tRNA modification; N(7)-methylguanine-tRNA biosynthesis. Its function is as follows. Catalyzes the formation of N(7)-methylguanine at position 46 (m7G46) in tRNA. The polypeptide is tRNA (guanine-N(7)-)-methyltransferase (Limosilactobacillus fermentum (strain NBRC 3956 / LMG 18251) (Lactobacillus fermentum)).